The following is a 58-amino-acid chain: Proteinase inhibitor PSKP-1 (58 aa).

Positions 1–58 (VIEPKCYKYEGKKCPPDINPVCGTDKRTYYNECALCVFIRQSTKKADKAIKIKKWGKC) constitute a Kazal-like domain. Intrachain disulfides connect cysteine 6/cysteine 36, cysteine 14/cysteine 33, and cysteine 22/cysteine 58.

As to quaternary structure, monomer. Skin.

The protein resides in the secreted. In terms of biological role, has antibacterial activity against Gram-negative bacterium E.coli ATCC 11229. Shows hemagglutinating activity. Inhibits prolyl endopeptidase, but not trypsin, chymotrypsin, V8 protease and proteinase K. May have a role in mucosal defense against microbes by interacting directly with their membranes. This Phyllomedusa sauvagei (Sauvage's leaf frog) protein is Proteinase inhibitor PSKP-1.